We begin with the raw amino-acid sequence, 543 residues long: Protein DETOXIFICATION 47, chloroplastic (543 aa).

A chloroplast-targeting transit peptide spans 1 to 30 (MLIKSQRLTLFSPLLSKTRRIPVNSHQTLV). Residues 55-94 (VIRRRIKLERVTRNCVRIDREIDEEEEEEEKERGDLVKQS) are a coiled coil. 12 consecutive transmembrane segments (helical) span residues 107 to 127 (GPAMGMWICGPLMSLIDTVVI), 135 to 155 (LAALGPGTVLCDHMSYVFMFL), 181 to 201 (VLLFIGLVCGLMMLLLTRLFG), 228 to 248 (GLAWPFILVGLVAQSASLGMK), 256 to 276 (ALAAATIINGLGDTILCLFLG), 278 to 298 (GIAGAAWATTASQIVSAYMMM), 319 to 339 (LWKISALAAPVFISIFSKIAF), 342 to 362 (FIIYCATSMGTHVLAAHQVMA), 406 to 426 (IIGATLGLVLGVIGTAVPGLF), 443 to 463 (LLIPFFMALSALPMTVSLEGT), 472 to 492 (FVSSVMSSSFIIGCLTLMFVT), and 497 to 517 (GLLGCWFVLVGFQWGRFGLYL).

Belongs to the multi antimicrobial extrusion (MATE) (TC 2.A.66.1) family. As to expression, preferentially expressed in the epidermal cells.

Its subcellular location is the plastid. It is found in the chloroplast membrane. Functionally, functions as a multidrug and toxin extrusion transporter in the export of salicylic acid (SA) from the chloroplast to the cytoplasm. Plays an essential function in plant defense via the pathogen-induced salicylic acid (SA) accumulation. Also acts as a key component of the Age-related resistance (ARR) pathway. In Arabidopsis thaliana (Mouse-ear cress), this protein is Protein DETOXIFICATION 47, chloroplastic.